A 463-amino-acid polypeptide reads, in one-letter code: NADH dehydrogenase [ubiquinone] iron-sulfur protein 2, mitochondrial (463 aa).

The N-terminal 33 residues, 1-33 (MAALRALCRLRGAAAQVLRPGAGVRLPIQPSRG), are a transit peptide targeting the mitochondrion. At Lys62 the chain carries N6-acetyllysine. Arg118 carries the symmetric dimethylarginine modification. Cys326, Cys332, and Cys347 together coordinate [4Fe-4S] cluster.

Belongs to the complex I 49 kDa subunit family. As to quaternary structure, core subunit of respiratory chain NADH dehydrogenase (Complex I) which is composed of 45 different subunits. Component of the iron-sulfur (IP) fragment of the enzyme. Interacts with NDUFAF3. Interacts with NDUFAF7. Interacts with CERS2. [4Fe-4S] cluster is required as a cofactor. Dimethylation at Arg-118 by NDUFAF7 takes place after NDUFS2 assembles into the complex I, leading to stabilize the early intermediate complex.

The protein localises to the mitochondrion inner membrane. The enzyme catalyses a ubiquinone + NADH + 5 H(+)(in) = a ubiquinol + NAD(+) + 4 H(+)(out). Its function is as follows. Core subunit of the mitochondrial membrane respiratory chain NADH dehydrogenase (Complex I) which catalyzes electron transfer from NADH through the respiratory chain, using ubiquinone as an electron acceptor. Essential for the catalytic activity and assembly of complex I. Redox-sensitive, critical component of the oxygen-sensing pathway in the pulmonary vasculature which plays a key role in acute pulmonary oxygen-sensing and hypoxic pulmonary vasoconstriction. Plays an important role in carotid body sensing of hypoxia. Essential for glia-like neural stem and progenitor cell proliferation, differentiation and subsequent oligodendrocyte or neuronal maturation. This Bos taurus (Bovine) protein is NADH dehydrogenase [ubiquinone] iron-sulfur protein 2, mitochondrial (NDUFS2).